Reading from the N-terminus, the 970-residue chain is Rho GTPase-activating protein gacK (970 aa).

The first 20 residues, 1–20 (MTLVYEKSSFVLIMAQIAEA), serve as a signal peptide directing secretion. Disordered stretches follow at residues 30 to 49 (SNDL…SAAI), 258 to 285 (STCS…INQN), 312 to 446 (EITI…FSPT), 487 to 550 (STSN…NNNN), and 860 to 886 (TASS…NDDP). Low complexity-rich tracts occupy residues 35–49 (STSA…SAAI) and 258–269 (STCSLSSNASNN). Residues 321–333 (IPLPPQSSSPPPT) show a composition bias toward pro residues. A compositionally biased stretch (low complexity) spans 334–383 (RNNQSSPSPSSPQQQNIMPTPPSTSLTPPQSPTLSPSSSTHSTPTQTTTT). The span at 392–406 (PSTISQNNARKTQIP) shows a compositional bias: polar residues. The segment covering 407-426 (TTTTTTTTTTTTTSTTSTTS) has biased composition (low complexity). Residues 427 to 446 (PNPVVNNKNLNTPSSSFSPT) show a composition bias toward polar residues. The region spanning 754-970 (IEDSELVEDN…LELIQFNKSL (217 aa)) is the Rho-GAP domain. Positions 860–885 (TASSAATANSSSSGSGNGNSSPNNDD) are enriched in low complexity.

It localises to the cytoplasm. In terms of biological role, rho GTPase-activating protein involved in the signal transduction pathway. This chain is Rho GTPase-activating protein gacK (gacK), found in Dictyostelium discoideum (Social amoeba).